Here is a 362-residue protein sequence, read N- to C-terminus: Phosphoserine aminotransferase (362 aa).

Residue Arg43 coordinates L-glutamate. Residues 77 to 78, Trp103, Thr153, Asp173, and Gln196 each bind pyridoxal 5'-phosphate; that span reads AR. At Lys197 the chain carries N6-(pyridoxal phosphate)lysine.

The protein belongs to the class-V pyridoxal-phosphate-dependent aminotransferase family. SerC subfamily. In terms of assembly, homodimer. Requires pyridoxal 5'-phosphate as cofactor.

It is found in the cytoplasm. It carries out the reaction O-phospho-L-serine + 2-oxoglutarate = 3-phosphooxypyruvate + L-glutamate. It catalyses the reaction 4-(phosphooxy)-L-threonine + 2-oxoglutarate = (R)-3-hydroxy-2-oxo-4-phosphooxybutanoate + L-glutamate. It participates in amino-acid biosynthesis; L-serine biosynthesis; L-serine from 3-phospho-D-glycerate: step 2/3. The protein operates within cofactor biosynthesis; pyridoxine 5'-phosphate biosynthesis; pyridoxine 5'-phosphate from D-erythrose 4-phosphate: step 3/5. Catalyzes the reversible conversion of 3-phosphohydroxypyruvate to phosphoserine and of 3-hydroxy-2-oxo-4-phosphonooxybutanoate to phosphohydroxythreonine. The polypeptide is Phosphoserine aminotransferase (Legionella pneumophila subsp. pneumophila (strain Philadelphia 1 / ATCC 33152 / DSM 7513)).